The sequence spans 217 residues: tRNA (guanine-N(7)-)-methyltransferase (217 aa).

Glu-44, Glu-69, Asp-96, and Asp-118 together coordinate S-adenosyl-L-methionine. The active site involves Asp-118. Residues Lys-122, Asp-154, and 191 to 194 (TEYE) contribute to the substrate site.

It belongs to the class I-like SAM-binding methyltransferase superfamily. TrmB family.

The enzyme catalyses guanosine(46) in tRNA + S-adenosyl-L-methionine = N(7)-methylguanosine(46) in tRNA + S-adenosyl-L-homocysteine. It participates in tRNA modification; N(7)-methylguanine-tRNA biosynthesis. In terms of biological role, catalyzes the formation of N(7)-methylguanine at position 46 (m7G46) in tRNA. The polypeptide is tRNA (guanine-N(7)-)-methyltransferase (Bacillus cereus (strain G9842)).